The following is a 218-amino-acid chain: Thiamine-phosphate synthase (218 aa).

Residues 45-49 (QYREK) and Asn77 contribute to the 4-amino-2-methyl-5-(diphosphooxymethyl)pyrimidine site. Mg(2+)-binding residues include Asp78 and Asp97. Position 116 (Ser116) interacts with 4-amino-2-methyl-5-(diphosphooxymethyl)pyrimidine. 142–144 (TKT) contributes to the 2-[(2R,5Z)-2-carboxy-4-methylthiazol-5(2H)-ylidene]ethyl phosphate binding site. Lys145 lines the 4-amino-2-methyl-5-(diphosphooxymethyl)pyrimidine pocket. 2-[(2R,5Z)-2-carboxy-4-methylthiazol-5(2H)-ylidene]ethyl phosphate is bound by residues Gly173 and 193–194 (VT).

Belongs to the thiamine-phosphate synthase family. Mg(2+) serves as cofactor.

The catalysed reaction is 2-[(2R,5Z)-2-carboxy-4-methylthiazol-5(2H)-ylidene]ethyl phosphate + 4-amino-2-methyl-5-(diphosphooxymethyl)pyrimidine + 2 H(+) = thiamine phosphate + CO2 + diphosphate. The enzyme catalyses 2-(2-carboxy-4-methylthiazol-5-yl)ethyl phosphate + 4-amino-2-methyl-5-(diphosphooxymethyl)pyrimidine + 2 H(+) = thiamine phosphate + CO2 + diphosphate. It catalyses the reaction 4-methyl-5-(2-phosphooxyethyl)-thiazole + 4-amino-2-methyl-5-(diphosphooxymethyl)pyrimidine + H(+) = thiamine phosphate + diphosphate. Its pathway is cofactor biosynthesis; thiamine diphosphate biosynthesis; thiamine phosphate from 4-amino-2-methyl-5-diphosphomethylpyrimidine and 4-methyl-5-(2-phosphoethyl)-thiazole: step 1/1. In terms of biological role, condenses 4-methyl-5-(beta-hydroxyethyl)thiazole monophosphate (THZ-P) and 2-methyl-4-amino-5-hydroxymethyl pyrimidine pyrophosphate (HMP-PP) to form thiamine monophosphate (TMP). The polypeptide is Thiamine-phosphate synthase (Pelotomaculum thermopropionicum (strain DSM 13744 / JCM 10971 / SI)).